Reading from the N-terminus, the 348-residue chain is Major outer membrane protein (348 aa).

The N-terminal stretch at 1-20 (MKKTIVALAVAAVAATSANA) is a signal peptide.

In terms of assembly, disulfide bond interactions within and between MOMP molecules and other components form high molecular-weight oligomers.

It is found in the cell outer membrane. Structural rigidity of the outer membrane of elementary bodies and porin forming, permitting diffusion of solutes through the intracellular reticulate body membrane. This Pasteurella multocida (strain Pm70) protein is Major outer membrane protein (ompH).